The sequence spans 343 residues: Anthranilate phosphoribosyltransferase (343 aa).

Residues glycine 86, 89–90 (GD), threonine 94, 96–99 (NIST), 114–122 (KHGNKSASG), and serine 126 each bind 5-phospho-alpha-D-ribose 1-diphosphate. Glycine 86 provides a ligand contact to anthranilate. Mg(2+) is bound at residue serine 98. Asparagine 117 is an anthranilate binding site. Arginine 172 contributes to the anthranilate binding site. Residues aspartate 231 and glutamate 232 each coordinate Mg(2+).

Belongs to the anthranilate phosphoribosyltransferase family. In terms of assembly, homodimer. Requires Mg(2+) as cofactor.

The enzyme catalyses N-(5-phospho-beta-D-ribosyl)anthranilate + diphosphate = 5-phospho-alpha-D-ribose 1-diphosphate + anthranilate. It participates in amino-acid biosynthesis; L-tryptophan biosynthesis; L-tryptophan from chorismate: step 2/5. Its function is as follows. Catalyzes the transfer of the phosphoribosyl group of 5-phosphorylribose-1-pyrophosphate (PRPP) to anthranilate to yield N-(5'-phosphoribosyl)-anthranilate (PRA). This is Anthranilate phosphoribosyltransferase from Prochlorococcus marinus subsp. pastoris (strain CCMP1986 / NIES-2087 / MED4).